Reading from the N-terminus, the 865-residue chain is NBPF family member NBPF11 (865 aa).

The stretch at 70–130 (MLRNERQFKE…RSLNEHLQAL (61 aa)) forms a coiled coil. Residues 161 to 200 (KLSPENDEDEDEDVQVEEDEKVLESSAPREVQKAEESKVP) form a disordered region. Positions 165-181 (ENDEDEDEDVQVEEDEK) are enriched in acidic residues. In terms of domain architecture, Olduvai 1 spans 165-259 (ENDEDEDEDV…GCQDALNILP (95 aa)). Residues 190–200 (EVQKAEESKVP) are compositionally biased toward basic and acidic residues. Positions 339–401 (KSMLRNERQF…RSLNEHLQAL (63 aa)) form a coiled coil. Olduvai domains are found at residues 436-528 (ENDN…HIIP), 529-617 (ENES…ATGP), 620-675 (SREL…VDMD), 676-767 (EIEK…PPCP), and 770-865 (SREL…SAAC). 2 disordered regions span residues 450–475 (AEKV…EDSL) and 520–567 (WEDA…GYST). 2 stretches are compositionally biased toward acidic residues: residues 530 to 539 (NESDDEEEEE) and 550 to 562 (ESEE…ESWD). Residues 829–865 (RGRGRKEGEEDQRRKEEGEEKKGKKIKTHHAPGSAAC) form a disordered region. Positions 833–850 (RKEGEEDQRRKEEGEEKK) are enriched in basic and acidic residues.

The protein belongs to the NBPF family. In terms of tissue distribution, expressed in spinal cord.

The protein resides in the cytoplasm. The protein is NBPF family member NBPF11 of Homo sapiens (Human).